The primary structure comprises 446 residues: N-succinylarginine dihydrolase (446 aa).

Substrate-binding positions include 19-28, asparagine 110, and 137-138; these read AGLSFGNVAS and HR. The active site involves glutamate 174. Arginine 213 is a binding site for substrate. Histidine 249 is an active-site residue. Substrate is bound by residues aspartate 251 and asparagine 364. The active-site Nucleophile is cysteine 370.

The protein belongs to the succinylarginine dihydrolase family. As to quaternary structure, homodimer.

The catalysed reaction is N(2)-succinyl-L-arginine + 2 H2O + 2 H(+) = N(2)-succinyl-L-ornithine + 2 NH4(+) + CO2. Its pathway is amino-acid degradation; L-arginine degradation via AST pathway; L-glutamate and succinate from L-arginine: step 2/5. Functionally, catalyzes the hydrolysis of N(2)-succinylarginine into N(2)-succinylornithine, ammonia and CO(2). The protein is N-succinylarginine dihydrolase of Burkholderia orbicola (strain MC0-3).